A 134-amino-acid polypeptide reads, in one-letter code: ATP synthase epsilon chain, chloroplastic (134 aa).

Belongs to the ATPase epsilon chain family. In terms of assembly, F-type ATPases have 2 components, CF(1) - the catalytic core - and CF(0) - the membrane proton channel. CF(1) has five subunits: alpha(3), beta(3), gamma(1), delta(1), epsilon(1). CF(0) has three main subunits: a, b and c.

The protein localises to the plastid. It is found in the chloroplast thylakoid membrane. Produces ATP from ADP in the presence of a proton gradient across the membrane. This is ATP synthase epsilon chain, chloroplastic from Spinacia oleracea (Spinach).